Reading from the N-terminus, the 55-residue chain is Lantibiotic epilancin (55 aa).

Residues 1–24 (MNNSLFDLNLNKGVETQKSDLSPQ) constitute a propeptide, cleaved by ElxP. The residue at position 25 (Ser25) is a D-lactate; by the dehydratase ElxB and the dehydrogenase ElxO. At Ser27 the chain carries 2,3-didehydroalanine (Ser); by the dehydratase ElxB. Position 31 is a 2,3-didehydrobutyrine; by the dehydratase ElxB (Thr31). The residue at position 32 (Ser32) is a 2,3-didehydroalanine (Ser); by the dehydratase ElxB. The lanthionine (Ser-Cys); by the dehydratase ElxB and the cyclase ElxC cross-link spans 36–40 (SKKYC). 2 consecutive cross-links (beta-methyllanthionine (Thr-Cys); by the dehydratase ElxB and the cyclase ElxC) follow at residues 44-47 (TLTC) and 46-49 (TCGC). Thr52 carries the 2,3-didehydrobutyrine; by the dehydratase ElxB modification.

This sequence belongs to the type A lantibiotic family. In terms of processing, maturation of this lantibiotic involves the enzymatic conversion of Thr, and Ser into dehydrated AA by ElxB and the formation of thioether bonds with cysteine by the cyclase ElxC. The next steps are cleavage of the leader peptide by ElxP and membrane translocation by ElxT. The leader peptide may be removed before membrane translocation, in contrast to other lantibiotics for which the cleavage occur after translocation. This is suggested by the probable cytoplasmic localization of the serine protease ElxP that cleaves the leader peptide. It is not established whether the 2,3-didehydrobutyrine is the E- or Z-isomer. Post-translationally, the N-terminal D-lactate is probably produced by dehydration of Ser-25 by ElxB, followed by proteolytic removal of the leader peptide by the serine protease ElxP and hydrolysis of the resulting new N-terminal dehydroalanine. This hydrolysis may occur spontaneously. The pyruvate group thus formed is reduced to D-lactate by the NADPH-dependent oxidoreductase ElxO. This N-terminal D-lactate protects the lantibiotic against degradation against aminopeptidase.

Its function is as follows. Lanthionine-containing peptide antibiotic (lantibiotic) active on Gram-positive bacteria such as staphylococci, enterococci and streptococci. The bactericidal activity of lantibiotics is based on depolarization of energized bacterial cytoplasmic membranes, initiated by the formation of aqueous transmembrane pores. This chain is Lantibiotic epilancin (elkA), found in Staphylococcus epidermidis.